The chain runs to 121 residues: Small ribosomal subunit protein uS13 (121 aa).

Residues 94–121 are disordered; the sequence is GLPVRGQNTKNNARTRKGKAVAIAGKKK. A compositionally biased stretch (basic residues) spans 106–121; that stretch reads ARTRKGKAVAIAGKKK.

Belongs to the universal ribosomal protein uS13 family. Part of the 30S ribosomal subunit. Forms a loose heterodimer with protein S19. Forms two bridges to the 50S subunit in the 70S ribosome.

Functionally, located at the top of the head of the 30S subunit, it contacts several helices of the 16S rRNA. In the 70S ribosome it contacts the 23S rRNA (bridge B1a) and protein L5 of the 50S subunit (bridge B1b), connecting the 2 subunits; these bridges are implicated in subunit movement. Contacts the tRNAs in the A and P-sites. The protein is Small ribosomal subunit protein uS13 of Streptococcus sanguinis (strain SK36).